The following is a 223-amino-acid chain: Urease accessory protein UreF (223 aa).

This sequence belongs to the UreF family. UreD, UreF and UreG form a complex that acts as a GTP-hydrolysis-dependent molecular chaperone, activating the urease apoprotein by helping to assemble the nickel containing metallocenter of UreC. The UreE protein probably delivers the nickel.

Its subcellular location is the cytoplasm. Functionally, required for maturation of urease via the functional incorporation of the urease nickel metallocenter. In Rhizobium johnstonii (strain DSM 114642 / LMG 32736 / 3841) (Rhizobium leguminosarum bv. viciae), this protein is Urease accessory protein UreF.